Here is a 415-residue protein sequence, read N- to C-terminus: Lysosome-associated membrane glycoprotein 2 (415 aa).

The first 25 residues, 1-25, serve as a signal peptide directing secretion; that stretch reads MCLSPVKGAKLILIFLFLGAVQSNA. Residues 26–188 form a first lumenal domain region; sequence LIVNLTDSKG…SKNEQVCEED (163 aa). Residues 26 to 379 are Lumenal-facing; the sequence is LIVNLTDSKG…AQDCSADEDN (354 aa). Residues N29, N45, N54, N57, N97, N115, and N175 are each glycosylated (N-linked (GlcNAc...) asparagine). Residues C37 and C75 are joined by a disulfide bond. C149 and C185 are disulfide-bonded. A hinge region spans residues 189-233; it reads QTPTTVAPIIHTTAPSTTTTLTPTSTPTPTPTPTPTVGNYSIRNG. Over residues 202 to 213 the composition is skewed to low complexity; that stretch reads APSTTTTLTPTS. The disordered stretch occupies residues 202 to 227; the sequence is APSTTTTLTPTSTPTPTPTPTPTVGN. N227, N234, N247, N265, N280, N312, N317, N322, and N361 each carry an N-linked (GlcNAc...) asparagine glycan. Residues 234-379 are second lumenal domain; that stretch reads NTTCLLATMG…AQDCSADEDN (146 aa). C237 and C270 are oxidised to a cystine. Cysteines 336 and 373 form a disulfide. The chain crosses the membrane as a helical span at residues 380-404; sequence FLVPIAVGAALGGVLILVLLAYFIG. The Cytoplasmic segment spans residues 405–415; sequence LKRHHTGYEQF. An important for binding and subsequent lysosomal degradation of target proteins region spans residues 406–409; that stretch reads KRHH.

Belongs to the LAMP family. Monomer. Forms large homooligomers. Interacts (via its cytoplasmic region) with HSPA8; HSPA8 mediates recruitment of proteins with a KFERQ motif to the surface of the lysosome for chaperone-mediated autophagy. Interacts with HSP90 in the lysosome lumen; this enhances LAMP2 stability. Interacts with MLLT11. Interacts with ABCB9. Interacts with FURIN. Interacts with CT55; this interaction may be important for LAMP2 protein stability. Interacts with TMEM175; inhibiting the proton channel activity of TMEM175. Forms a ternary complex with RAB7A and RUFY4 (via RUN domain); the interaction with RAB7A is mediated by RUFY4 (via RUN and coiled coil domains). Post-translationally, extensively N-glycosylated. Contains a minor proportion of O-linked glycans. As to expression, detected in liver and kidney (at protein level). Detected in liver and kidney.

The protein localises to the lysosome membrane. It is found in the endosome membrane. The protein resides in the cytoplasmic vesicle. It localises to the autophagosome membrane. Its subcellular location is the cell membrane. Functionally, lysosomal membrane glycoprotein which plays an important role in lysosome biogenesis, lysosomal pH regulation and autophagy. Acts as an important regulator of lysosomal lumen pH regulation by acting as a direct inhibitor of the proton channel TMEM175, facilitating lysosomal acidification for optimal hydrolase activity. Plays an important role in chaperone-mediated autophagy, a process that mediates lysosomal degradation of proteins in response to various stresses and as part of the normal turnover of proteins with a long biological half-live. Functions by binding target proteins, such as GAPDH, NLRP3 and MLLT11, and targeting them for lysosomal degradation. In the chaperone-mediated autophagy, acts downstream of chaperones, such as HSPA8/HSC70, which recognize and bind substrate proteins and mediate their recruitment to lysosomes, where target proteins bind LAMP2. Plays a role in lysosomal protein degradation in response to starvation. Required for the fusion of autophagosomes with lysosomes during autophagy. Cells that lack LAMP2 express normal levels of VAMP8, but fail to accumulate STX17 on autophagosomes, which is the most likely explanation for the lack of fusion between autophagosomes and lysosomes. Required for normal degradation of the contents of autophagosomes. Required for efficient MHC class II-mediated presentation of exogenous antigens via its function in lysosomal protein degradation; antigenic peptides generated by proteases in the endosomal/lysosomal compartment are captured by nascent MHC II subunits. Is not required for efficient MHC class II-mediated presentation of endogenous antigens. The sequence is that of Lysosome-associated membrane glycoprotein 2 (Lamp2) from Mus musculus (Mouse).